A 301-amino-acid polypeptide reads, in one-letter code: Tyrosine recombinase XerD (301 aa).

The region spanning 7-90 is the Core-binding (CB) domain; it reads QFHTTILEQF…ALKVFFLFLK (84 aa). In terms of domain architecture, Tyr recombinase spans 109-294; sequence RLPSVLTPQE…AADSLIEKFL (186 aa). Active-site residues include Arg153, Lys175, His246, Arg249, and His272. The active-site O-(3'-phospho-DNA)-tyrosine intermediate is the Tyr281.

It belongs to the 'phage' integrase family. XerD subfamily. As to quaternary structure, forms a cyclic heterotetrameric complex composed of two molecules of XerC and two molecules of XerD.

The protein resides in the cytoplasm. Functionally, site-specific tyrosine recombinase, which acts by catalyzing the cutting and rejoining of the recombining DNA molecules. The XerC-XerD complex is essential to convert dimers of the bacterial chromosome into monomers to permit their segregation at cell division. It also contributes to the segregational stability of plasmids. The polypeptide is Tyrosine recombinase XerD (Chlamydia pneumoniae (Chlamydophila pneumoniae)).